Here is a 796-residue protein sequence, read N- to C-terminus: Lon protease 2 (796 aa).

The Lon N-terminal domain occupies 9–206 (LPIVILKENV…KLIVNLSIEI (198 aa)). 352-359 (GPPGIGKT) contacts ATP. In terms of domain architecture, Lon proteolytic spans 617–796 (IDSSGFVYGL…EEVFDYLNII (180 aa)). Residues Ser-702 and Lys-745 contribute to the active site.

Belongs to the peptidase S16 family. As to quaternary structure, homohexamer. Organized in a ring with a central cavity.

It localises to the cytoplasm. It catalyses the reaction Hydrolysis of proteins in presence of ATP.. In terms of biological role, ATP-dependent serine protease that mediates the selective degradation of mutant and abnormal proteins as well as certain short-lived regulatory proteins. Required for cellular homeostasis and for survival from DNA damage and developmental changes induced by stress. Degrades polypeptides processively to yield small peptide fragments that are 5 to 10 amino acids long. Binds to DNA in a double-stranded, site-specific manner. The sequence is that of Lon protease 2 (lon2) from Borreliella burgdorferi (strain ATCC 35210 / DSM 4680 / CIP 102532 / B31) (Borrelia burgdorferi).